A 29-amino-acid polypeptide reads, in one-letter code: Dander allergen Equ c 2.0101 (29 aa).

The protein belongs to the calycin superfamily. Lipocalin family.

It localises to the secreted. The sequence is that of Dander allergen Equ c 2.0101 from Equus caballus (Horse).